A 549-amino-acid polypeptide reads, in one-letter code: Oxygen-dependent choline dehydrogenase (549 aa).

Position 4–33 (4–33) interacts with FAD; it reads DFVIIGSGSAGSAMAYRLSEDGRYSVIVIE. His465 functions as the Proton acceptor in the catalytic mechanism.

It belongs to the GMC oxidoreductase family. Requires FAD as cofactor.

It carries out the reaction choline + A = betaine aldehyde + AH2. The enzyme catalyses betaine aldehyde + NAD(+) + H2O = glycine betaine + NADH + 2 H(+). It functions in the pathway amine and polyamine biosynthesis; betaine biosynthesis via choline pathway; betaine aldehyde from choline (cytochrome c reductase route): step 1/1. In terms of biological role, involved in the biosynthesis of the osmoprotectant glycine betaine. Catalyzes the oxidation of choline to betaine aldehyde and betaine aldehyde to glycine betaine at the same rate. In Brucella canis (strain ATCC 23365 / NCTC 10854 / RM-666), this protein is Oxygen-dependent choline dehydrogenase.